Consider the following 255-residue polypeptide: MVFDTHLHTLFSTDSKMNIEEAIDAGEKKNLGIIITEHIDLNYPVKGEFVFDIDKYFKEYNKYRSNKVLLGVEIGMGEEIKEQNKSINDKYEFDYVLGSIHLLNGLDLYEKTIYKSSPKKEVFEMYFKTMLACLRCHEYIDSLAHIDYISRYAAYHDGEIYYNEYSDYIDEVLKFIVDREIVIEINTRRLNKKEVCENLMPIYKRYSELGGRFVTIGSDSHYKDSIGLNFKNALKMAENCNLKPVFFEKRLMKYA.

This sequence belongs to the PHP hydrolase family. HisK subfamily.

It catalyses the reaction L-histidinol phosphate + H2O = L-histidinol + phosphate. Its pathway is amino-acid biosynthesis; L-histidine biosynthesis; L-histidine from 5-phospho-alpha-D-ribose 1-diphosphate: step 8/9. The protein is Probable histidinol-phosphatase (hisK) of Clostridium acetobutylicum (strain ATCC 824 / DSM 792 / JCM 1419 / IAM 19013 / LMG 5710 / NBRC 13948 / NRRL B-527 / VKM B-1787 / 2291 / W).